Here is a 77-residue protein sequence, read N- to C-terminus: Translation initiation factor IF-1, chloroplastic (77 aa).

Positions 1-71 (MKEQKLIHEG…TRGRIIYRLR (71 aa)) constitute an S1-like domain.

The protein belongs to the IF-1 family. In terms of assembly, component of the 30S ribosomal translation pre-initiation complex which assembles on the 30S ribosome in the order IF-2 and IF-3, IF-1 and N-formylmethionyl-tRNA(fMet); mRNA recruitment can occur at any time during PIC assembly.

It localises to the plastid. Its subcellular location is the chloroplast. One of the essential components for the initiation of protein synthesis. Stabilizes the binding of IF-2 and IF-3 on the 30S subunit to which N-formylmethionyl-tRNA(fMet) subsequently binds. Helps modulate mRNA selection, yielding the 30S pre-initiation complex (PIC). Upon addition of the 50S ribosomal subunit IF-1, IF-2 and IF-3 are released leaving the mature 70S translation initiation complex. This is Translation initiation factor IF-1, chloroplastic from Acorus calamus var. americanus (American sweet flag).